A 1101-amino-acid polypeptide reads, in one-letter code: Furin-like protease 1, isoform 1-CRR (1101 aa).

The tract at residues M1–S57 is disordered. Residues T13–N28 are compositionally biased toward low complexity. N-linked (GlcNAc...) asparagine glycans are attached at residues N15, N18, and N28. Positions N38 to S57 are enriched in polar residues. N108 is a glycosylation site (N-linked (GlcNAc...) asparagine). Residues V119–F139 traverse the membrane as a helical segment. The span at S150–P163 shows a compositional bias: low complexity. The segment at S150–G187 is disordered. Pro residues predominate over residues S164–S178. N-linked (GlcNAc...) asparagine glycosylation occurs at N333. Residues M340–V654 enclose the Peptidase S8 domain. Catalysis depends on charge relay system residues D372 and H413. N426 carries an N-linked (GlcNAc...) asparagine glycan. 2 disulfide bridges follow: C430–C579 and C522–C552. S587 (charge relay system) is an active-site residue. N-linked (GlcNAc...) asparagine glycosylation is present at N606. A P/Homo B domain is found at A662–P791. The cysteines at positions 669 and 695 are disulfide-linked. 2 N-linked (GlcNAc...) asparagine glycosylation sites follow: N727 and N859. Positions E886–N915 are disordered. A compositionally biased stretch (polar residues) spans P901–N915. Residue N978 is glycosylated (N-linked (GlcNAc...) asparagine). Residues T1014–I1034 form a helical membrane-spanning segment.

It belongs to the peptidase S8 family. Furin subfamily. Ca(2+) serves as cofactor. In adults, isoform 1-CRR is expressed in CNS, fat body, and female reproductive tissues, and in embryos, in anal pads, hindgut, developing antennomaxillary complex, oenocytes, clipeolabrum, pharynx, trachea, CNS and developing posterior spiracles.

It localises to the golgi apparatus membrane. It catalyses the reaction Release of mature proteins from their proproteins by cleavage of -Arg-Xaa-Yaa-Arg-|-Zaa- bonds, where Xaa can be any amino acid and Yaa is Arg or Lys. Releases albumin, complement component C3 and von Willebrand factor from their respective precursors.. In terms of biological role, furin is likely to represent the ubiquitous endoprotease activity within constitutive secretory pathways and capable of cleavage at the RX(K/R)R consensus motif. The sequence is that of Furin-like protease 1, isoform 1-CRR (Fur1) from Drosophila melanogaster (Fruit fly).